A 353-amino-acid polypeptide reads, in one-letter code: Ion-translocating oxidoreductase complex subunit D (353 aa).

Helical transmembrane passes span 20-39 (LMRL…WYFF), 68-88 (PISH…LGIC), and 129-149 (VMLL…LTLV). An FMN phosphoryl threonine modification is found at Thr-187. The next 4 membrane-spanning stretches (helical) occupy residues 215 to 235 (LALG…FLIS), 238 to 258 (AIAW…SFIG), 267 to 287 (ASTM…FILT), and 300 to 320 (IIVG…GGYP).

The protein belongs to the NqrB/RnfD family. The complex is composed of six subunits: RnfA, RnfB, RnfC, RnfD, RnfE and RnfG. It depends on FMN as a cofactor.

It localises to the cell inner membrane. Its function is as follows. Part of a membrane-bound complex that couples electron transfer with translocation of ions across the membrane. The protein is Ion-translocating oxidoreductase complex subunit D of Colwellia psychrerythraea (strain 34H / ATCC BAA-681) (Vibrio psychroerythus).